The chain runs to 359 residues: MRQILIAVGLALAVSILLTPVLIRLFTRQGFGHEIREDGPPTHHKKRGTPSMGGVAILAGIWVSYLGTHLVGLALDGEGPSASGLLVLGLATALGIVGFIDDLIKIRRARNLGLNKTAKTVGILAAALLFGVLALQFGNADGLTPGSPELSYVREIATVTLAPMIFVLFCVVLVSAWSNAVNFTDGLDGLAAGAMAMVCAAYVLITFWQYRNACATSPGLGCYNVRDPLDLALVAAAAAGACIGFLWWNAAPAKIFMGDTGSLALGGIIAGLSVTSRTEILAVVLGALFVAEVTSVVVQILAFRTTGRRVFRMAPFHHHFELVGWAETTVIIRFWLLTAIACGLGVALFYGEWLTAVGA.

The next 10 helical transmembrane spans lie at 3–23 (QILIAVGLALAVSILLTPVLI), 55–75 (VAILAGIWVSYLGTHLVGLAL), 84–104 (GLLVLGLATALGIVGFIDDLI), 120–140 (TVGILAAALLFGVLALQFGNA), 156–176 (IATVTLAPMIFVLFCVVLVSA), 187–207 (LDGLAAGAMAMVCAAYVLITF), 231–251 (LALVAAAAAGACIGFLWWNAA), 255–275 (IFMGDTGSLALGGIIAGLSVT), 280–300 (ILAVVLGALFVAEVTSVVVQI), and 334–354 (FWLLTAIACGLGVALFYGEWL).

This sequence belongs to the glycosyltransferase 4 family. MraY subfamily. It depends on Mg(2+) as a cofactor.

The protein resides in the cell membrane. The enzyme catalyses UDP-N-acetyl-alpha-D-muramoyl-L-alanyl-gamma-D-glutamyl-meso-2,6-diaminopimeloyl-D-alanyl-D-alanine + di-trans,octa-cis-undecaprenyl phosphate = di-trans,octa-cis-undecaprenyl diphospho-N-acetyl-alpha-D-muramoyl-L-alanyl-D-glutamyl-meso-2,6-diaminopimeloyl-D-alanyl-D-alanine + UMP. It functions in the pathway cell wall biogenesis; peptidoglycan biosynthesis. Functionally, catalyzes the initial step of the lipid cycle reactions in the biosynthesis of the cell wall peptidoglycan: transfers peptidoglycan precursor phospho-MurNAc-pentapeptide from UDP-MurNAc-pentapeptide onto the lipid carrier undecaprenyl phosphate, yielding undecaprenyl-pyrophosphoryl-MurNAc-pentapeptide, known as lipid I. This is Phospho-N-acetylmuramoyl-pentapeptide-transferase from Mycobacterium sp. (strain MCS).